A 469-amino-acid chain; its full sequence is Trigger factor (469 aa).

One can recognise a PPIase FKBP-type domain in the interval 166 to 245 (GDFLTIDITA…VKSVKERELP (80 aa)). Residues 430–469 (GGEEEAAEAEAAPAVDSDAVEGEAATEEAAPSDDPAAVKF) form a disordered region.

Belongs to the FKBP-type PPIase family. Tig subfamily.

The protein localises to the cytoplasm. It carries out the reaction [protein]-peptidylproline (omega=180) = [protein]-peptidylproline (omega=0). Involved in protein export. Acts as a chaperone by maintaining the newly synthesized protein in an open conformation. Functions as a peptidyl-prolyl cis-trans isomerase. This is Trigger factor from Arthrobacter sp. (strain FB24).